The following is a 926-amino-acid chain: Tyrosine-protein phosphatase non-receptor type 4 (926 aa).

The 284-residue stretch at 29 to 312 (VVCNILLLDN…EHHTFFRLDR (284 aa)) folds into the FERM domain. 2 disordered regions span residues 380 to 412 (DDRLETQSLPSRSPPGTPNHRNSTFTQEGTRLR) and 430 to 475 (EVFV…KNSW). 2 stretches are compositionally biased toward polar residues: residues 398–408 (NHRNSTFTQEG) and 430–456 (EVFVNQRSPSSTQANSIVLESSPSQET). Ser474 bears the Phosphoserine mark. A PDZ domain is found at 517–589 (LIRMKPDENG…DQVVLFIKAS (73 aa)). A Tyrosine-protein phosphatase domain is found at 655-911 (VLTQFDQLYR…RFVCEAILKV (257 aa)). Substrate contacts are provided by residues Asp820, 852–858 (CSAGIGR), and Gln896. Cys852 acts as the Phosphocysteine intermediate in catalysis.

The protein belongs to the protein-tyrosine phosphatase family. Non-receptor class subfamily. In terms of assembly, interacts with MAPK12 (via C-terminus); this interaction abolishes PTPN4 catalytic autoinhibition and thus activates the phosphatase activity. As to quaternary structure, (Microbial infection) Interacts with attenuated rabies virus protein G; this interaction is required for virally-induced apoptosis. Highly phosphorylated on serine and threonine residues but not on tyrosines. Post-translationally, cleaved and activated by calpain I/CAPN1.

Its subcellular location is the cell membrane. The protein localises to the cytoplasm. The protein resides in the cytoskeleton. The enzyme catalyses O-phospho-L-tyrosyl-[protein] + H2O = L-tyrosyl-[protein] + phosphate. Phosphatase that plays a role in immunity, learning, synaptic plasticity or cell homeostasis. Regulates neuronal cell homeostasis by protecting neurons against apoptosis. Negatively regulates TLR4-induced interferon beta production by dephosphorylating adapter TICAM2 and inhibiting subsequent TRAM-TRIF interaction. Also dephosphorylates the immunoreceptor tyrosine-based activation motifs/ITAMs of the TCR zeta subunit and thereby negatively regulates TCR-mediated signaling pathway. May act at junctions between the membrane and the cytoskeleton. The polypeptide is Tyrosine-protein phosphatase non-receptor type 4 (PTPN4) (Homo sapiens (Human)).